Reading from the N-terminus, the 331-residue chain is Probable cytosolic iron-sulfur protein assembly protein Ciao1 (331 aa).

WD repeat units follow at residues 12 to 51 (GHKGRIWGVAWHPKGNSFASCGEDKAIRIWSLSGNTWTTK), 57 to 96 (GHKRTIREVRWSPCGEYLASASFDATTAIWSKHECTATLE), 97 to 136 (GHENEVKSVSWSRSGGLLATCSRDKSVWIWEVAGDDEFEC), 142 to 181 (AHSQDVKRVVWHPTKEVLASASYDNTIKMFAESALDSDWD), 188 to 227 (SHTSTVWSIDFDADGERLVSCSDDATLKIWRAYHPGNDAG), 246 to 285 (EHSRAIYDVSWCKQTGLIASACGDDGIRIFKECSDSKRDA), and 297 to 331 (AHEQDVNAVEWNPVTAGQLISCSDDGTIKIWKLQE).

This sequence belongs to the WD repeat CIA1 family.

Functionally, essential component of the cytosolic iron-sulfur (Fe/S) protein assembly machinery. Required for the maturation of extramitochondrial Fe/S proteins. The sequence is that of Probable cytosolic iron-sulfur protein assembly protein Ciao1 from Drosophila virilis (Fruit fly).